A 106-amino-acid polypeptide reads, in one-letter code: Phosphoribosyl-ATP pyrophosphatase (106 aa).

Belongs to the PRA-PH family.

It localises to the cytoplasm. The enzyme catalyses 1-(5-phospho-beta-D-ribosyl)-ATP + H2O = 1-(5-phospho-beta-D-ribosyl)-5'-AMP + diphosphate + H(+). It functions in the pathway amino-acid biosynthesis; L-histidine biosynthesis; L-histidine from 5-phospho-alpha-D-ribose 1-diphosphate: step 2/9. In Limosilactobacillus fermentum (strain NBRC 3956 / LMG 18251) (Lactobacillus fermentum), this protein is Phosphoribosyl-ATP pyrophosphatase.